The chain runs to 231 residues: Uracil phosphoribosyltransferase (231 aa).

Position 38-42 (38-42 (KGLVR)) interacts with GTP. 5-phospho-alpha-D-ribose 1-diphosphate-binding positions include R87, R112, and 140–148 (DPMIATGST). Uracil contacts are provided by residues I203 and 208-210 (GDA). Residue D209 coordinates 5-phospho-alpha-D-ribose 1-diphosphate.

The protein belongs to the UPRTase family. Requires Mg(2+) as cofactor.

It carries out the reaction UMP + diphosphate = 5-phospho-alpha-D-ribose 1-diphosphate + uracil. The protein operates within pyrimidine metabolism; UMP biosynthesis via salvage pathway; UMP from uracil: step 1/1. Its activity is regulated as follows. Allosterically activated by GTP. Functionally, catalyzes the conversion of uracil and 5-phospho-alpha-D-ribose 1-diphosphate (PRPP) to UMP and diphosphate. The sequence is that of Uracil phosphoribosyltransferase from Methanococcus maripaludis (strain DSM 14266 / JCM 13030 / NBRC 101832 / S2 / LL).